A 137-amino-acid polypeptide reads, in one-letter code: Histone H2B (137 aa).

The span at methionine 1–proline 10 shows a compositional bias: basic and acidic residues. The tract at residues methionine 1 to lysine 45 is disordered. Residues lysine 8 and lysine 9 each carry the N6-acetyllysine; alternate modification. Residues lysine 8 and lysine 9 each participate in a glycyl lysine isopeptide (Lys-Gly) (interchain with G-Cter in SUMO); alternate cross-link. Serine 12 is modified (phosphoserine). Residue lysine 13 is modified to N6-acetyllysine. Position 24 is an N6-acetyllysine; alternate (lysine 24). A Glycyl lysine isopeptide (Lys-Gly) (interchain with G-Cter in SUMO); alternate cross-link involves residue lysine 24. Lysine 25 participates in a covalent cross-link: Glycyl lysine isopeptide (Lys-Gly) (interchain with G-Cter in SUMO). Lysine 131 participates in a covalent cross-link: Glycyl lysine isopeptide (Lys-Gly) (interchain with G-Cter in ubiquitin).

The protein belongs to the histone H2B family. As to quaternary structure, the nucleosome is a histone octamer containing two molecules each of H2A, H2B, H3 and H4 assembled in one H3-H4 heterotetramer and two H2A-H2B heterodimers. The octamer wraps approximately 147 bp of DNA. Monoubiquitinated by the UBC2-BRE1 complex to form H2BK123ub1. H2BK123ub1 gives a specific tag for epigenetic transcriptional activation and is also prerequisite for H3K4me and H3K79me formation. H2BK123ub1 also modulates the formation of double-strand breaks during meiosis and is a prerequisite for DNA-damage checkpoint activation. In terms of processing, phosphorylated by STE20 to form H2BS10ph during progression through meiotic prophase. May be correlated with chromosome condensation. Post-translationally, acetylated by GCN5 to form H2BK11ac and H2BK16ac. H2BK16ac can also be formed by ESA1. Acetylation of N-terminal lysines and particularly formation of H2BK11acK16ac has a positive effect on transcription. Sumoylation to form H2BK6su or H2BK7su, and probably also H2BK16su or H2BK17su, occurs preferentially near the telomeres and represses gene transcription.

The protein localises to the nucleus. Its subcellular location is the chromosome. Its function is as follows. Core component of nucleosome. Nucleosomes wrap and compact DNA into chromatin, limiting DNA accessibility to the cellular machineries which require DNA as a template. Histones thereby play a central role in transcription regulation, DNA repair, DNA replication and chromosomal stability. DNA accessibility is regulated via a complex set of post-translational modifications of histones, also called histone code, and nucleosome remodeling. This chain is Histone H2B (HTB1), found in Pyricularia oryzae (strain Y34) (Rice blast fungus).